Here is a 28-residue protein sequence, read N- to C-terminus: Ranatuerin-2SEb (28 aa).

An intrachain disulfide couples cysteine 23 to cysteine 28.

Expressed by the skin glands.

It localises to the secreted. Functionally, mast cell degranulating peptide. Causes histamine release from rat peritoneal mast cells in vitro. Has antibacterial activity against the Gram-negative bacterium E.coli K12 and Gram-positive bacterium M.luteus NCT C2665. The polypeptide is Ranatuerin-2SEb (Lithobates sevosus (Dusky gopher frog)).